The primary structure comprises 211 residues: Large ribosomal subunit protein bL25 (211 aa).

The segment at 188–211 (APKAAKVSTDDEAAAPAEEAPAAE) is disordered. Over residues 201–211 (AAPAEEAPAAE) the composition is skewed to low complexity.

It belongs to the bacterial ribosomal protein bL25 family. CTC subfamily. In terms of assembly, part of the 50S ribosomal subunit; part of the 5S rRNA/L5/L18/L25 subcomplex. Contacts the 5S rRNA. Binds to the 5S rRNA independently of L5 and L18.

This is one of the proteins that binds to the 5S RNA in the ribosome where it forms part of the central protuberance. This is Large ribosomal subunit protein bL25 from Colwellia psychrerythraea (strain 34H / ATCC BAA-681) (Vibrio psychroerythus).